A 151-amino-acid polypeptide reads, in one-letter code: Pseudo histidine-containing phosphotransfer protein 2 (151 aa).

The region spanning Ser38–Tyr133 is the HPt domain.

Its function is as follows. Functions as a two-component phosphorelay mediator between cytokinin sensor histidine kinases and response regulators (B-type ARRs). Plays an important role in propagating cytokinin signal transduction. This is Pseudo histidine-containing phosphotransfer protein 2 from Oryza sativa subsp. japonica (Rice).